The sequence spans 238 residues: Aspartate/glutamate leucyltransferase (238 aa).

Belongs to the R-transferase family. Bpt subfamily.

It is found in the cytoplasm. It carries out the reaction N-terminal L-glutamyl-[protein] + L-leucyl-tRNA(Leu) = N-terminal L-leucyl-L-glutamyl-[protein] + tRNA(Leu) + H(+). The enzyme catalyses N-terminal L-aspartyl-[protein] + L-leucyl-tRNA(Leu) = N-terminal L-leucyl-L-aspartyl-[protein] + tRNA(Leu) + H(+). Functionally, functions in the N-end rule pathway of protein degradation where it conjugates Leu from its aminoacyl-tRNA to the N-termini of proteins containing an N-terminal aspartate or glutamate. The chain is Aspartate/glutamate leucyltransferase from Shewanella sp. (strain ANA-3).